The primary structure comprises 242 residues: Small ribosomal subunit protein uS3 (242 aa).

Residues 39 to 110 form the KH type-2 domain; the sequence is IRKFIHKKYG…QVRINVVEVE (72 aa). The interval 216–242 is disordered; that stretch reads QTMPVGANPRRRASRRPQQFEDRSNEG. A compositionally biased stretch (basic and acidic residues) spans 233–242; sequence QQFEDRSNEG.

The protein belongs to the universal ribosomal protein uS3 family. Part of the 30S ribosomal subunit. Forms a tight complex with proteins S10 and S14.

Binds the lower part of the 30S subunit head. Binds mRNA in the 70S ribosome, positioning it for translation. The polypeptide is Small ribosomal subunit protein uS3 (Synechococcus sp. (strain CC9902)).